We begin with the raw amino-acid sequence, 361 residues long: BBSome complex member bbs-5 (361 aa).

The protein belongs to the BBS5 family. In terms of assembly, part of BBSome complex, that contains at least bbs-1, bbs-2, bbs-4, bbs-5, osm-12, bbs-8/ttc-8 and bbs-9. Interacts with bbs-4 (via C-terminus); the interaction is direct.

It localises to the cell projection. The protein localises to the cilium membrane. It is found in the cytoplasm. The protein resides in the cytoskeleton. Its subcellular location is the cilium basal body. It localises to the microtubule organizing center. The protein localises to the centrosome. It is found in the centriolar satellite. In terms of biological role, component of the BBSome complex. The BBSome complex is thought to function as a coat complex required for sorting of specific membrane proteins to the primary cilia. The BBSome complex is required for ciliogenesis but is dispensable for centriolar satellite function. Required for BBSome complex ciliary localization but not for the proper complex assembly. Required, redundantly with bbs-4, for cilia biogenesis and both the assembly and movement of intraflagellar transport proteins along the ciliary axoneme. Plays a role in the removal of degraded mechanosensory receptors within the cilia. This chain is BBSome complex member bbs-5, found in Caenorhabditis elegans.